The following is a 308-amino-acid chain: Cilia- and flagella-associated protein 73 (308 aa).

Coiled coils occupy residues 103–134 (RIQK…LEKN) and 164–227 (LSAT…QEAK).

This sequence belongs to the CFAP73 family. Interacts with FAP100; form the modifier of inner arm (MIA) complex.

The protein localises to the cytoplasm. It is found in the cytoskeleton. It localises to the flagellum axoneme. Its function is as follows. As part of MIA, a complex associated with the outer doublet microtubules of the axoneme, may play a role in ciliary/flagellar motility by regulating the assembly and the activity of inner dynein arm. In Chlamydomonas reinhardtii (Chlamydomonas smithii), this protein is Cilia- and flagella-associated protein 73.